Consider the following 333-residue polypeptide: Ketol-acid reductoisomerase (NADP(+)) (333 aa).

Residues 1 to 179 (MFYDDNADLS…GGTRAGVIKT (179 aa)) enclose the KARI N-terminal Rossmann domain. Residues 22-25 (YGSQ), Ser48, Ser50, and 80-83 (DTAQ) contribute to the NADP(+) site. His105 is an active-site residue. Gly131 contacts NADP(+). The KARI C-terminal knotted domain occupies 180-325 (TFKDETETDL…KKLRDLMSWV (146 aa)). Mg(2+) is bound by residues Asp188, Glu192, Glu224, and Glu228. Ser249 serves as a coordination point for substrate.

This sequence belongs to the ketol-acid reductoisomerase family. The cofactor is Mg(2+).

It catalyses the reaction (2R)-2,3-dihydroxy-3-methylbutanoate + NADP(+) = (2S)-2-acetolactate + NADPH + H(+). The catalysed reaction is (2R,3R)-2,3-dihydroxy-3-methylpentanoate + NADP(+) = (S)-2-ethyl-2-hydroxy-3-oxobutanoate + NADPH + H(+). It functions in the pathway amino-acid biosynthesis; L-isoleucine biosynthesis; L-isoleucine from 2-oxobutanoate: step 2/4. It participates in amino-acid biosynthesis; L-valine biosynthesis; L-valine from pyruvate: step 2/4. Its function is as follows. Involved in the biosynthesis of branched-chain amino acids (BCAA). Catalyzes an alkyl-migration followed by a ketol-acid reduction of (S)-2-acetolactate (S2AL) to yield (R)-2,3-dihydroxy-isovalerate. In the isomerase reaction, S2AL is rearranged via a Mg-dependent methyl migration to produce 3-hydroxy-3-methyl-2-ketobutyrate (HMKB). In the reductase reaction, this 2-ketoacid undergoes a metal-dependent reduction by NADPH to yield (R)-2,3-dihydroxy-isovalerate. This chain is Ketol-acid reductoisomerase (NADP(+)), found in Mycobacterium leprae (strain TN).